Here is a 74-residue protein sequence, read N- to C-terminus: Exodeoxyribonuclease 7 small subunit (74 aa).

It belongs to the XseB family. Heterooligomer composed of large and small subunits.

Its subcellular location is the cytoplasm. It carries out the reaction Exonucleolytic cleavage in either 5'- to 3'- or 3'- to 5'-direction to yield nucleoside 5'-phosphates.. Functionally, bidirectionally degrades single-stranded DNA into large acid-insoluble oligonucleotides, which are then degraded further into small acid-soluble oligonucleotides. The sequence is that of Exodeoxyribonuclease 7 small subunit from Synechococcus elongatus (strain ATCC 33912 / PCC 7942 / FACHB-805) (Anacystis nidulans R2).